The sequence spans 199 residues: MAERPPLILASRSPYRRALLEQVRLPHEAIPADVDESRHPDEPAHDYVLRLARAKAEAVAERRPDALVIGSDQAAVLGERVLGKPGSEARAREQLATASGQCVTFLTGVAVVHAAGGRRQSDVVPYRVHFRDLDETTIARYVALEQPLDCAGSFKSEGLGAVLFQRMEGSDPNALIGLPLIRLFDFLLACGYPLIGSEE.

Asp-72 functions as the Proton acceptor in the catalytic mechanism.

It belongs to the Maf family. YceF subfamily. A divalent metal cation serves as cofactor.

It localises to the cytoplasm. It carries out the reaction N(7)-methyl-GTP + H2O = N(7)-methyl-GMP + diphosphate + H(+). In terms of biological role, nucleoside triphosphate pyrophosphatase that hydrolyzes 7-methyl-GTP (m(7)GTP). May have a dual role in cell division arrest and in preventing the incorporation of modified nucleotides into cellular nucleic acids. The protein is 7-methyl-GTP pyrophosphatase of Alkalilimnicola ehrlichii (strain ATCC BAA-1101 / DSM 17681 / MLHE-1).